The primary structure comprises 497 residues: Glycerol kinase (497 aa).

Threonine 12 lines the ADP pocket. Residues threonine 12, threonine 13, and serine 14 each coordinate ATP. Threonine 12 contacts sn-glycerol 3-phosphate. An ADP-binding site is contributed by arginine 16. Arginine 82, glutamate 83, tyrosine 134, and aspartate 243 together coordinate sn-glycerol 3-phosphate. 5 residues coordinate glycerol: arginine 82, glutamate 83, tyrosine 134, aspartate 243, and glutamine 244. Residues threonine 265 and glycine 308 each contribute to the ADP site. Positions 265, 308, 312, and 409 each coordinate ATP. 2 residues coordinate ADP: glycine 409 and asparagine 413.

This sequence belongs to the FGGY kinase family.

It carries out the reaction glycerol + ATP = sn-glycerol 3-phosphate + ADP + H(+). It participates in polyol metabolism; glycerol degradation via glycerol kinase pathway; sn-glycerol 3-phosphate from glycerol: step 1/1. Inhibited by fructose 1,6-bisphosphate (FBP). Its function is as follows. Key enzyme in the regulation of glycerol uptake and metabolism. Catalyzes the phosphorylation of glycerol to yield sn-glycerol 3-phosphate. The chain is Glycerol kinase from Oleidesulfovibrio alaskensis (strain ATCC BAA-1058 / DSM 17464 / G20) (Desulfovibrio alaskensis).